A 99-amino-acid chain; its full sequence is Pterin-4-alpha-carbinolamine dehydratase (99 aa).

It belongs to the pterin-4-alpha-carbinolamine dehydratase family.

It catalyses the reaction (4aS,6R)-4a-hydroxy-L-erythro-5,6,7,8-tetrahydrobiopterin = (6R)-L-erythro-6,7-dihydrobiopterin + H2O. Involved in tetrahydrobiopterin biosynthesis. In Dictyostelium discoideum (Social amoeba), this protein is Pterin-4-alpha-carbinolamine dehydratase (pcbd).